The sequence spans 137 residues: Hydrogenase-4 component J (137 aa).

To E.coli HycH.

In terms of biological role, possible component of hydrogenase 4. The protein is Hydrogenase-4 component J of Escherichia coli (strain K12).